Consider the following 152-residue polypeptide: uncharacterized protein (152 aa).

The VOC domain maps to 7–133 (PALSPHLVVD…FGHHWSLGQP (127 aa)).

This is an uncharacterized protein from Mycobacterium bovis (strain ATCC BAA-935 / AF2122/97).